A 160-amino-acid chain; its full sequence is Probable chemoreceptor glutamine deamidase CheD 1 (160 aa).

The protein belongs to the CheD family.

The catalysed reaction is L-glutaminyl-[protein] + H2O = L-glutamyl-[protein] + NH4(+). Its function is as follows. Probably deamidates glutamine residues to glutamate on methyl-accepting chemotaxis receptors (MCPs), playing an important role in chemotaxis. This Syntrophus aciditrophicus (strain SB) protein is Probable chemoreceptor glutamine deamidase CheD 1.